A 177-amino-acid polypeptide reads, in one-letter code: uncharacterized protein (177 aa).

Low complexity-rich tracts occupy residues 78 to 93 (NNNN…NTNN) and 120 to 130 (SDVNSNNNNGN). The interval 78–146 (NNNNNNNNTI…NKKLKKDGTN (69 aa)) is disordered. Positions 131–146 (HQKKKINKKLKKDGTN) are enriched in basic residues.

This is an uncharacterized protein from Dictyostelium discoideum (Social amoeba).